Consider the following 462-residue polypeptide: Glutamate--tRNA ligase (462 aa).

Positions 11-21 (PSPTGFIHLGN) match the 'HIGH' region motif. Positions 243 to 247 (KMSKR) match the 'KMSKS' region motif. Lys-246 contacts ATP.

The protein belongs to the class-I aminoacyl-tRNA synthetase family. Glutamate--tRNA ligase type 1 subfamily. Monomer.

The protein localises to the cytoplasm. The enzyme catalyses tRNA(Glu) + L-glutamate + ATP = L-glutamyl-tRNA(Glu) + AMP + diphosphate. Catalyzes the attachment of glutamate to tRNA(Glu) in a two-step reaction: glutamate is first activated by ATP to form Glu-AMP and then transferred to the acceptor end of tRNA(Glu). In Albidiferax ferrireducens (strain ATCC BAA-621 / DSM 15236 / T118) (Rhodoferax ferrireducens), this protein is Glutamate--tRNA ligase.